The following is a 200-amino-acid chain: 3-isopropylmalate dehydratase small subunit (200 aa).

It belongs to the LeuD family. LeuD type 1 subfamily. As to quaternary structure, heterodimer of LeuC and LeuD.

It catalyses the reaction (2R,3S)-3-isopropylmalate = (2S)-2-isopropylmalate. Its pathway is amino-acid biosynthesis; L-leucine biosynthesis; L-leucine from 3-methyl-2-oxobutanoate: step 2/4. Catalyzes the isomerization between 2-isopropylmalate and 3-isopropylmalate, via the formation of 2-isopropylmaleate. The polypeptide is 3-isopropylmalate dehydratase small subunit (Campylobacter jejuni subsp. jejuni serotype O:23/36 (strain 81-176)).